Reading from the N-terminus, the 162-residue chain is Ribosomal RNA large subunit methyltransferase H (162 aa).

Residues leucine 78 and glycine 110 each coordinate S-adenosyl-L-methionine.

Belongs to the RNA methyltransferase RlmH family. Homodimer.

The protein localises to the cytoplasm. The catalysed reaction is pseudouridine(1915) in 23S rRNA + S-adenosyl-L-methionine = N(3)-methylpseudouridine(1915) in 23S rRNA + S-adenosyl-L-homocysteine + H(+). Functionally, specifically methylates the pseudouridine at position 1915 (m3Psi1915) in 23S rRNA. The polypeptide is Ribosomal RNA large subunit methyltransferase H (Bradyrhizobium sp. (strain ORS 278)).